The following is a 653-amino-acid chain: MPASRLRDRAASSASGSTCGSMSQTHPVLESGLLASAGCSAPRGPRKGGPAPVDRKAKASAMPDSPAEVKTQPRSTPPSMPPPPPAASQGATRPPSFTPHTHREDGPATLPHGRFHGCLKWSMVCLLMNGSSHSPTAINGAPCTPNGFSNGPATSSTASLSTQHLPPACGARQLSKLKRFLTTLQQFGSDISPEIGERVRTLVLGLVNSTLTIEEFHSKLQEATNFPLRPFVIPFLKANLPLLQRELLHCARLAKQTPAQYLAQHEQLLLDASASSPIDSSELLLEVNENGKRRTPDRTKENGSDRDPLHPEHLSKRPCTLNPAQRYSPSNGPPQPTPPPHYRLEDIAMAHHFRDAYRHPDPRELRERHRPLVVPGSRQEEVIDHKLTEREWAEEWKHLNNLLNCIMDMVEKTRRSLTVLRRCQEADREELNHWARRYSDAEDTKKGPAPAAARPRSSSAGPEGPQLDVPREFLPRTLTGYVPEDIWRKAEEAVNEVKRQAMSELQKAVSDAERKAHELITTERAKMERALAEAKRQASEDALTVINQQEDSSESCWNCGRKASETCSGCNAARYCGSFCQHRDWEKHHHVCGQSLQGPTAVVADPVPGPPEAAHSLGPSLPVGAASPSEAGSAGPSRPGSPSPPGPLDTVPR.

Residues 1–10 are compositionally biased toward basic and acidic residues; that stretch reads MPASRLRDRA. The interval 1–109 is disordered; the sequence is MPASRLRDRA…HTHREDGPAT (109 aa). The required for nucleolar targeting (in isoform 1) stretch occupies residues 1–127; it reads MPASRLRDRA…CLKWSMVCLL (127 aa). The interval 1–430 is mediates interaction with PDE7A (in isoform 2); it reads MPASRLRDRA…RRCQEADREE (430 aa). A mediates localization to the nucleus region spans residues 1–435; it reads MPASRLRDRA…ADREELNHWA (435 aa). Low complexity predominate over residues 11-23; the sequence is ASSASGSTCGSMS. A compositionally biased stretch (pro residues) spans 75 to 86; sequence STPPSMPPPPPA. Positions 145–242 are interaction with ZBTB33; that stretch reads PNGFSNGPAT…IPFLKANLPL (98 aa). The TAFH domain maps to 171–266; that stretch reads ARQLSKLKRF…TPAQYLAQHE (96 aa). The segment at 176–268 is interaction with HIF1A; the sequence is KLKRFLTTLQ…AQYLAQHEQL (93 aa). Residues 284–342 are disordered; it reads LLEVNENGKRRTPDRTKENGSDRDPLHPEHLSKRPCTLNPAQRYSPSNGPPQPTPPPHY. Basic and acidic residues predominate over residues 289-315; that stretch reads ENGKRRTPDRTKENGSDRDPLHPEHLS. Pro residues predominate over residues 331–341; sequence NGPPQPTPPPH. Residues 394–412 form a nervy homology region 2 (NHR2); essential for down-regulation of PFKFB3, PFKFB4 and PDK1 expression region; sequence EEWKHLNNLLNCIMDMVEK. A compositionally biased stretch (basic and acidic residues) spans 434–446; that stretch reads WARRYSDAEDTKK. The tract at residues 434-472 is disordered; it reads WARRYSDAEDTKKGPAPAAARPRSSSAGPEGPQLDVPRE. Residues 447–462 show a composition bias toward low complexity; sequence GPAPAAARPRSSSAGP. Residues Ser457 and Ser459 each carry the phosphoserine modification. Thr479 carries the post-translational modification Phosphothreonine. The segment at 485–506 is mediates interaction with PRKAR2A; that stretch reads DIWRKAEEAVNEVKRQAMSELQ. The interval 485-533 is nervy homology region 3 (NHR3); essential for down-regulation of PFKFB3, PFKFB4 and PDK1 expression; the sequence is DIWRKAEEAVNEVKRQAMSELQKAVSDAERKAHELITTERAKMERALAE. Positions 488-543 form a coiled coil; the sequence is RKAEEAVNEVKRQAMSELQKAVSDAERKAHELITTERAKMERALAEAKRQASEDAL. Residues Cys556, Cys559, Cys567, Cys570, Cys576, Cys580, His588, and Cys592 each coordinate Zn(2+). The MYND-type zinc finger occupies 556–592; sequence CWNCGRKASETCSGCNAARYCGSFCQHRDWEKHHHVC. A disordered region spans residues 603–653; that stretch reads VADPVPGPPEAAHSLGPSLPVGAASPSEAGSAGPSRPGSPSPPGPLDTVPR. Residues 622 to 638 show a composition bias toward low complexity; it reads PVGAASPSEAGSAGPSR. A phosphoserine mark is found at Ser637 and Ser641. Thr650 carries the phosphothreonine modification.

The protein belongs to the CBFA2T family. Homooligomer. Homotetramerization is mediated by nervy homology region 2 (NRH2). Can interact with RUNX1T1 and CBFA2T2; heterotetramerization between members of the CBFA2T family is proposed. Component of a TAL-1 complex composed at least of CBFA2T3, LDB1, TAL1 and TCF3. Interacts with ERBB4, HDAC1, HDAC2, HDAC3, HDAC6, HDAC8, NCOR1, NCOR2, and ZNF652. According to PubMed:12242670, may not interact with HDAC6. Interacts with PLXNA1, PLXNA3 and PRKAR1A. Isoform 2 interacts with PRKAR2A, PDE7A and probably PDE4A. Interacts with ZBTB4, ZBTB38 and ZBTB33. Interacts with HIF1A and EGLN1. Interacts with the AML1-MTG8/ETO fusion protein. As to expression, widely expressed with higher expression in heart, pancreas, skeletal muscle, spleen, thymus and peripheral blood leukocytes. Expressed in hematopoietic cells (at protein level).

Its subcellular location is the nucleus. The protein resides in the nucleolus. It is found in the nucleoplasm. It localises to the golgi apparatus membrane. Transcriptional corepressor which facilitates transcriptional repression via its association with DNA-binding transcription factors and recruitment of other corepressors and histone-modifying enzymes. Can repress the expression of MMP7 in a ZBTB33-dependent manner. Reduces the protein levels and stability of the transcriptinal regulator HIF1A; interacts with EGLN1 and promotes the HIF1A prolyl hydroxylation-dependent ubiquitination and proteasomal degradation pathway. Contributes to inhibition of glycolysis and stimulation of mitochondrial respiration by down-regulating the expression of glycolytic genes including PFKFB3, PFKFB4, PDK1, PFKP, LDHA and HK1 which are direct targets of HIF1A. Regulates the proliferation and the differentiation of erythroid progenitors by repressing the expression of TAL1 target genes. Plays a role in granulocyte differentiation. Functionally, isoform 2 functions as an A-kinase-anchoring protein. This is Protein CBFA2T3 (CBFA2T3) from Homo sapiens (Human).